A 718-amino-acid polypeptide reads, in one-letter code: Coiled-coil domain-containing protein 157 (718 aa).

Residues 300 to 603 (LRAQLEDAEG…LTKIREVAQQ (304 aa)) adopt a coiled-coil conformation. Basic and acidic residues predominate over residues 469-482 (RGSLDEAEAQRSEL). 2 disordered regions span residues 469 to 490 (RGSL…QSLQ) and 617 to 690 (PPYK…TQNP). Low complexity predominate over residues 639-659 (TGRRQSPGSRTSSTGRTHPGG).

The chain is Coiled-coil domain-containing protein 157 (Ccdc157) from Mus musculus (Mouse).